Reading from the N-terminus, the 677-residue chain is Methionine--tRNA ligase (677 aa).

The 'HIGH' region signature appears at 14–24 (PYANGSIHLGH). The Zn(2+) site is built by cysteine 145, cysteine 148, cysteine 158, and cysteine 161. Residues 331–335 (KMSKS) carry the 'KMSKS' region motif. Residue lysine 334 coordinates ATP. The 103-residue stretch at 575–677 (AFAAVDLRIA…SGAKPGQRVK (103 aa)) folds into the tRNA-binding domain.

It belongs to the class-I aminoacyl-tRNA synthetase family. MetG type 1 subfamily. In terms of assembly, homodimer. Requires Zn(2+) as cofactor.

It is found in the cytoplasm. It carries out the reaction tRNA(Met) + L-methionine + ATP = L-methionyl-tRNA(Met) + AMP + diphosphate. Is required not only for elongation of protein synthesis but also for the initiation of all mRNA translation through initiator tRNA(fMet) aminoacylation. This is Methionine--tRNA ligase from Pseudomonas aeruginosa (strain LESB58).